Here is a 318-residue protein sequence, read N- to C-terminus: NADH-ubiquinone oxidoreductase chain 1 (318 aa).

A run of 8 helical transmembrane segments spans residues 2–22, 68–88, 100–120, 146–166, 171–191, 213–233, 253–273, and 285–305; these read PMTNLLLLIVPILIAMAFLML, ITLYITAPTLALTIALLLWTP, LGLLFILATSSLAVYSILWSG, LAIILLSTLLMSGSFNLSTLV, HLWLILPTWPLAMMWFISTLA, IEYAAGPFALFFMAEYMNIIM, ELYTTYFVTKALLLTSLFLWI, and LMHLLWKNFLPLTLASLMWYI.

It belongs to the complex I subunit 1 family. In terms of assembly, core subunit of respiratory chain NADH dehydrogenase (Complex I) which is composed of 45 different subunits.

The protein resides in the mitochondrion inner membrane. It catalyses the reaction a ubiquinone + NADH + 5 H(+)(in) = a ubiquinol + NAD(+) + 4 H(+)(out). Functionally, core subunit of the mitochondrial membrane respiratory chain NADH dehydrogenase (Complex I) which catalyzes electron transfer from NADH through the respiratory chain, using ubiquinone as an electron acceptor. Essential for the catalytic activity and assembly of complex I. This chain is NADH-ubiquinone oxidoreductase chain 1 (MT-ND1), found in Pan troglodytes (Chimpanzee).